The chain runs to 55 residues: Spermatid nuclear transition protein 1 (55 aa).

Residues 1–42 are compositionally biased toward basic residues; it reads MSTSRKLKSQGMRRGKNRTPHKGVKRSGSKRKYRKSSLKSRK. Positions 1–55 are disordered; the sequence is MSTSRKLKSQGMRRGKNRTPHKGVKRSGSKRKYRKSSLKSRKRCDDANRNLRSHL. 4 positions are modified to phosphoserine: S9, S36, S37, and S40.

It belongs to the nuclear transition protein 1 family. Testis.

The protein resides in the nucleus. It is found in the chromosome. Functionally, plays a key role in the replacement of histones to protamine in the elongating spermatids of mammals. In condensing spermatids, loaded onto the nucleosomes, where it promotes the recruitment and processing of protamines, which are responsible for histone eviction. This chain is Spermatid nuclear transition protein 1 (TNP1), found in Bos taurus (Bovine).